Here is a 780-residue protein sequence, read N- to C-terminus: Protein phosphatase 1 regulatory subunit 21 (780 aa).

Coiled-coil stretches lie at residues 1-209 and 556-605; these read MASA…NLHE and ESRE…DRLR. The interval 84–104 is disordered; it reads EPRGKKNKKSGESSSQLSQEQ. Residues 95–104 show a composition bias toward low complexity; that stretch reads ESSSQLSQEQ. Residue threonine 652 is modified to Phosphothreonine. Residues 694-742 are a coiled coil; the sequence is AECRALSKRLALAEKSKETLTEEMRLASQNISRLQDELMTTKRSYEDQL.

As to quaternary structure, component of the FERRY complex, composed of five subunits: TBCK, PPP1R21, FERRY3, CRYZL1 and GATAD1, with a ratio of 1:2:1:2:4 respectively. PPP1R21 serves as a binding hub connecting all five complex subunits to mediate the binding to specific mitochondrial mRNAs. Interacts with the GTP-bound form of RAB5A (via its C-terminal region); linking the mRNP complex onto trafficking endosomes for active mRNA transport. Interacts with PPP1CA. As to expression, expressed at 16 dpc in the cortex (at protein level).

It localises to the early endosome. In terms of biological role, component of the FERRY complex (Five-subunit Endosomal Rab5 and RNA/ribosome intermediary). The FERRY complex directly interacts with mRNAs and RAB5A, and functions as a RAB5A effector involved in the localization and the distribution of specific mRNAs most likely by mediating their endosomal transport. The complex recruits mRNAs and ribosomes to early endosomes through direct mRNA-interaction. In the complex, PPP1R21 serves as a binding hub connecting all five complex subunits and mediating the binding to mRNA and early endosomes via RAB5A. Putative regulator of protein phosphatase 1 (PP1) activity. May play a role in the endosomal sorting process or in endosome maturation pathway. The protein is Protein phosphatase 1 regulatory subunit 21 (Ppp1r21) of Mus musculus (Mouse).